The following is a 628-amino-acid chain: Chaperone protein HtpG (628 aa).

Residues 1-334 (MTTIDTASET…SEDLPLNLSR (334 aa)) are a; substrate-binding. A b region spans residues 335 to 550 (EMLQNNPQLA…GFGPDRELEK (216 aa)). A c region spans residues 551–628 (MLARANKGAA…LVLRGVVAHG (78 aa)).

It belongs to the heat shock protein 90 family. Homodimer.

The protein localises to the cytoplasm. Functionally, molecular chaperone. Has ATPase activity. The polypeptide is Chaperone protein HtpG (Rhodopseudomonas palustris (strain HaA2)).